A 419-amino-acid chain; its full sequence is MRFIGLVLLLLSVKLFGIDATLEIVKNTNKIPYIVVERLDSENADFGAKVLKMLAADLKVSGHFQVYDGSVNKNSEVAYKDYADKKIDLLAQIKVSKSSNSLTGTISLYDINTSKRIYVKDYTENDVKRFPFIAHRMCIDVNSYIQAPSIEWMQRLVVLSQYTTSGNSEILIADYTLTYQKVVVKGGLNIFPKWVDSKQESIYYTKYLDVPTILKHNLTTGHIEQLVGSEGIAVVSDVSKNGENLILSLSPTALSDLYLYNTKSKNLRRLTNYSGIDVDGKFVNNEKEIIFVSDRLGYPNIFMMRLDGGGTEQVVLHGRNNSAVTSNGKYAVYTSRETNNEFGANTFNLYLISLAPGSNYIRRLTASGKNQMPKYSNDGGTIMYLKYYKAQSALGIIRIDYNTNYFFPLIKMKIQAFDW.

The signal sequence occupies residues 1 to 17 (MRFIGLVLLLLSVKLFG).

This sequence belongs to the TolB family. The Tol-Pal system is composed of five core proteins: the inner membrane proteins TolA, TolQ and TolR, the periplasmic protein TolB and the outer membrane protein Pal. They form a network linking the inner and outer membranes and the peptidoglycan layer.

It is found in the periplasm. Part of the Tol-Pal system, which plays a role in outer membrane invagination during cell division and is important for maintaining outer membrane integrity. This chain is Tol-Pal system protein TolB, found in Helicobacter hepaticus (strain ATCC 51449 / 3B1).